The primary structure comprises 429 residues: Histidine--tRNA ligase (429 aa).

This sequence belongs to the class-II aminoacyl-tRNA synthetase family. Homodimer.

The protein resides in the cytoplasm. The catalysed reaction is tRNA(His) + L-histidine + ATP = L-histidyl-tRNA(His) + AMP + diphosphate + H(+). In Corynebacterium efficiens (strain DSM 44549 / YS-314 / AJ 12310 / JCM 11189 / NBRC 100395), this protein is Histidine--tRNA ligase.